The chain runs to 345 residues: N-acetyl-gamma-glutamyl-phosphate reductase (345 aa).

Cysteine 149 is an active-site residue.

It belongs to the NAGSA dehydrogenase family. Type 1 subfamily.

Its subcellular location is the cytoplasm. The enzyme catalyses N-acetyl-L-glutamate 5-semialdehyde + phosphate + NADP(+) = N-acetyl-L-glutamyl 5-phosphate + NADPH + H(+). It participates in amino-acid biosynthesis; L-arginine biosynthesis; N(2)-acetyl-L-ornithine from L-glutamate: step 3/4. Catalyzes the NADPH-dependent reduction of N-acetyl-5-glutamyl phosphate to yield N-acetyl-L-glutamate 5-semialdehyde. In Geobacillus stearothermophilus (Bacillus stearothermophilus), this protein is N-acetyl-gamma-glutamyl-phosphate reductase.